Here is a 164-residue protein sequence, read N- to C-terminus: Disulfide bond formation protein B (164 aa).

The Cytoplasmic segment spans residues 1 to 9 (MTLPSARTC). The chain crosses the membrane as a helical span at residues 10–26 (FLLGFLFCAALLAAALY). Residues 27–44 (FQFSGGLEPCPLCISQRI) lie on the Periplasmic side of the membrane. Residues cysteine 36 and cysteine 39 are joined by a disulfide bond. Residues 45 to 61 (MVLAVALVFLAAAIHHP) form a helical membrane-spanning segment. Residues 62 to 68 (ASLGIRA) lie on the Cytoplasmic side of the membrane. Residues 69-85 (YALLGTAVALGGASISG) traverse the membrane as a helical segment. Over 86-142 (RHVWLLHLPPEEVPECGPGLSYMFRNFPLGDTLKAMLSGTGDCAKVDWTFLGLSMPA) the chain is Periplasmic. Residues cysteine 101 and cysteine 128 are joined by a disulfide bond. A helical transmembrane segment spans residues 143–161 (WVLICFLGLGAFSLLQWWN). Residues 162 to 164 (AER) are Cytoplasmic-facing.

It belongs to the DsbB family.

The protein localises to the cell inner membrane. Functionally, required for disulfide bond formation in some periplasmic proteins. Acts by oxidizing the DsbA protein. This is Disulfide bond formation protein B from Methylococcus capsulatus (strain ATCC 33009 / NCIMB 11132 / Bath).